The following is a 316-amino-acid chain: Protein FLUORESCENT IN BLUE LIGHT, chloroplastic (316 aa).

The transit peptide at 1–26 (MAALIRCCSSFSHTSGGQPPPRDKSR) directs the protein to the chloroplast. Residues 125–145 (MFSMPILLLVALIGATVGGLL) traverse the membrane as a helical segment. The stretch at 144-175 (LLARQRKGELQRLNEQLRQINAALRRQAKIES) forms a coiled coil. 3 TPR repeats span residues 203-236 (LISK…AQSL), 243-276 (KKAA…SKRE), and 283-316 (TEAY…LETD).

Part of the FLU-containing chloroplast membrane complex composed of FLU, CRD1, PORB, PORC, CHLP and HEMA1. Interacts with HEMA1 (via C-terminus) only in the absence of light. No interaction with HEMA2.

It localises to the plastid. The protein resides in the chloroplast membrane. The protein localises to the chloroplast thylakoid membrane. Negative regulator of tetrapyrrole biosynthesis (including chlorophyll) in chloroplasts, probably via HEMA1 repression. Inhibits especially the magnesium ion Mg(2+) branch of tetrapyrrole biosynthesis, but independently of heme. This Arabidopsis thaliana (Mouse-ear cress) protein is Protein FLUORESCENT IN BLUE LIGHT, chloroplastic (FLU).